The primary structure comprises 429 residues: Enolase (429 aa).

Gln163 lines the (2R)-2-phosphoglycerate pocket. Glu205 functions as the Proton donor in the catalytic mechanism. Mg(2+) is bound by residues Asp242, Glu287, and Asp314. Residues Lys339, Arg368, Ser369, and Lys390 each coordinate (2R)-2-phosphoglycerate. Catalysis depends on Lys339, which acts as the Proton acceptor.

Belongs to the enolase family. The cofactor is Mg(2+).

Its subcellular location is the cytoplasm. It is found in the secreted. It localises to the cell surface. It carries out the reaction (2R)-2-phosphoglycerate = phosphoenolpyruvate + H2O. It participates in carbohydrate degradation; glycolysis; pyruvate from D-glyceraldehyde 3-phosphate: step 4/5. Catalyzes the reversible conversion of 2-phosphoglycerate (2-PG) into phosphoenolpyruvate (PEP). It is essential for the degradation of carbohydrates via glycolysis. The protein is Enolase of Cupriavidus taiwanensis (strain DSM 17343 / BCRC 17206 / CCUG 44338 / CIP 107171 / LMG 19424 / R1) (Ralstonia taiwanensis (strain LMG 19424)).